Consider the following 106-residue polypeptide: uncharacterized protein (106 aa).

This is an uncharacterized protein from Bacillus subtilis (strain 168).